The sequence spans 218 residues: Protein-methionine-sulfoxide reductase heme-binding subunit MsrQ (218 aa).

5 helical membrane-spanning segments follow: residues 8-28 (VIVA…LLGW), 60-80 (FLLI…AVLI), 86-106 (LGLY…TLDL), 121-141 (PYIT…ITST), and 155-175 (VHML…WLVK).

Belongs to the MsrQ family. As to quaternary structure, heterodimer of a catalytic subunit (MsrP) and a heme-binding subunit (MsrQ). FMN is required as a cofactor. Requires heme b as cofactor.

The protein resides in the cell inner membrane. Its function is as follows. Part of the MsrPQ system that repairs oxidized periplasmic proteins containing methionine sulfoxide residues (Met-O), using respiratory chain electrons. Thus protects these proteins from oxidative-stress damage caused by reactive species of oxygen and chlorine generated by the host defense mechanisms. MsrPQ is essential for the maintenance of envelope integrity under bleach stress, rescuing a wide series of structurally unrelated periplasmic proteins from methionine oxidation. MsrQ provides electrons for reduction to the reductase catalytic subunit MsrP, using the quinone pool of the respiratory chain. This chain is Protein-methionine-sulfoxide reductase heme-binding subunit MsrQ, found in Xanthomonas oryzae pv. oryzae (strain MAFF 311018).